The primary structure comprises 206 residues: MNRTKSSKRWLQEHFDDVYVKKAQAEGYRSRAVYKLKEIDDKESLIKPGMTVVDLGASPGGWTQYASEKMKGSGRLVALDILPMDALPNVEFILGDFREDNVLQELINLIPQRTLDLLLSDMAPNMSGSSAIDIPRAMYLVELAFDFAEKMLKPGGNMLVKIFHGSGFDELVKQARASFEKVVIRKPSASRSRSKETYLLAKGYNL.

5 residues coordinate S-adenosyl-L-methionine: Gly60, Trp62, Asp80, Asp96, and Asp121. Catalysis depends on Lys161, which acts as the Proton acceptor.

Belongs to the class I-like SAM-binding methyltransferase superfamily. RNA methyltransferase RlmE family.

The protein localises to the cytoplasm. The catalysed reaction is uridine(2552) in 23S rRNA + S-adenosyl-L-methionine = 2'-O-methyluridine(2552) in 23S rRNA + S-adenosyl-L-homocysteine + H(+). Functionally, specifically methylates the uridine in position 2552 of 23S rRNA at the 2'-O position of the ribose in the fully assembled 50S ribosomal subunit. This chain is Ribosomal RNA large subunit methyltransferase E, found in Legionella pneumophila (strain Lens).